The sequence spans 673 residues: DNA ligase (673 aa).

NAD(+)-binding positions include 34–38 (DAEYD), 83–84 (SL), and E116. K118 (N6-AMP-lysine intermediate) is an active-site residue. 4 residues coordinate NAD(+): R139, E176, K293, and K317. The Zn(2+) site is built by C411, C414, C429, and C435. The region spanning 595–673 (NQQNPFFGKT…EDEFLKWVNS (79 aa)) is the BRCT domain.

The protein belongs to the NAD-dependent DNA ligase family. LigA subfamily. Mg(2+) serves as cofactor. The cofactor is Mn(2+).

The catalysed reaction is NAD(+) + (deoxyribonucleotide)n-3'-hydroxyl + 5'-phospho-(deoxyribonucleotide)m = (deoxyribonucleotide)n+m + AMP + beta-nicotinamide D-nucleotide.. Functionally, DNA ligase that catalyzes the formation of phosphodiester linkages between 5'-phosphoryl and 3'-hydroxyl groups in double-stranded DNA using NAD as a coenzyme and as the energy source for the reaction. It is essential for DNA replication and repair of damaged DNA. The sequence is that of DNA ligase from Legionella pneumophila subsp. pneumophila (strain Philadelphia 1 / ATCC 33152 / DSM 7513).